The chain runs to 301 residues: UBX domain-containing protein 2 (301 aa).

Positions 1–61 (MSRNIRTFRD…AARGPDSEAH (61 aa)) are disordered. The 65-residue stretch at 89–153 (TISLTLHLWS…KVNRHHEEYV (65 aa)) folds into the SEP domain. The interval 176 to 200 (GQSSSSATTAGTSSATTDHNPDHTA) is disordered. Over residues 178–192 (SSSSATTAGTSSATT) the composition is skewed to low complexity. Residues 218 to 295 (MNEPTTNIQI…NVLNSVVAVK (78 aa)) enclose the UBX domain.

It belongs to the NSFL1C family. In terms of assembly, interacts with cdc-48.1 (via N-terminus) and cdc-48.2 (via N-terminus). Interacts with kinase air-1. As to expression, expressed in the germline (at protein level). Expressed in spermatocytes but not in mature sperm (at protein level). Ubiquitously expressed. Predominantly expressed in the spermatheca.

The protein localises to the cytoplasm. The protein resides in the perinuclear region. Its subcellular location is the nucleus. It localises to the cytoskeleton. It is found in the microtubule organizing center. The protein localises to the centrosome. Its function is as follows. Ubiquitin-binding protein which acts as an adapter for ATPase cdc-48.1 and/or cdc-48.2, conferring substrate specificity. Together with ubxn-2 and ubxn-3, plays a role in hermaphrodite spermatogenesis probably by promoting the degradation of sex determination terminal factor tra-1. Probably in association with ATPase cdc-48.1 or/and cdc-48.2, regulates the centrosomal levels of kinase air-1 levels during mitotic progression by promoting air-1 removal from centrosomes in prophase. Also, regulates spindle orientation in the one-cell embryo by controlling centration and rotation of the pronuclei-centrosome complex in prophase. The chain is UBX domain-containing protein 2 from Caenorhabditis elegans.